The chain runs to 556 residues: Protein F37C4.5 (556 aa).

Ala-2 is modified (N-acetylalanine).

This is Protein F37C4.5 from Caenorhabditis elegans.